The chain runs to 339 residues: MEKYEMVKDLGFGNFGLARLMRNKQTNELVAVKFIDRGYKIDENVAREIINHRALNHPNIVRFKEVVLTPTHLGIVMEYAAGGELFERISSVGRFSEAEARYFFQQLICGVHYLHALQICHRDLKLENTLLDGSPAPRLKICDFGYSKSSVLHSNPKSTVGTPAYIAPEVFCRSEYDGKSVDVWSCGVALYVMLVGAYPFEDPKDPRNFRKTVQKIMAVNYKIPGYVHISEDCRKLLSRIFVANPLHRSTLKEIKSHAWFLKNLPRELKEPAQAIYYQRNVNLINFSPQRVEEIMKIVGEARTIPNLSRPVESLGSDKKDDDEEEYLDANDEEWYDDYA.

A Protein kinase domain is found at 4–260 (YEMVKDLGFG…LKEIKSHAWF (257 aa)). Residues 10–18 (LGFGNFGLA) and Lys33 contribute to the ATP site. Catalysis depends on Asp123, which acts as the Proton acceptor. Residues 308 to 339 (SRPVESLGSDKKDDDEEEYLDANDEEWYDDYA) form a disordered region. The span at 320 to 339 (DDDEEEYLDANDEEWYDDYA) shows a compositional bias: acidic residues.

This sequence belongs to the protein kinase superfamily. Ser/Thr protein kinase family. Expressed in seedlings.

It carries out the reaction L-seryl-[protein] + ATP = O-phospho-L-seryl-[protein] + ADP + H(+). The enzyme catalyses L-threonyl-[protein] + ATP = O-phospho-L-threonyl-[protein] + ADP + H(+). This chain is Serine/threonine-protein kinase SRK2J (SRK2J), found in Arabidopsis thaliana (Mouse-ear cress).